We begin with the raw amino-acid sequence, 351 residues long: Small ribosomal subunit protein uS2 (351 aa).

The interval 302–351 is disordered; sequence QNNYDPSKRGYNPKYVNHKSTFNKFNNKKPAEATSQAKTNEKIVIKAETN. Basic and acidic residues predominate over residues 340 to 351; it reads TNEKIVIKAETN.

It belongs to the universal ribosomal protein uS2 family.

This is Small ribosomal subunit protein uS2 from Ureaplasma urealyticum serovar 10 (strain ATCC 33699 / Western).